The primary structure comprises 367 residues: Anhydro-N-acetylmuramic acid kinase (367 aa).

Residue 11–18 participates in ATP binding; the sequence is GTSLDGVD.

The protein belongs to the anhydro-N-acetylmuramic acid kinase family.

The catalysed reaction is 1,6-anhydro-N-acetyl-beta-muramate + ATP + H2O = N-acetyl-D-muramate 6-phosphate + ADP + H(+). It participates in amino-sugar metabolism; 1,6-anhydro-N-acetylmuramate degradation. Its pathway is cell wall biogenesis; peptidoglycan recycling. Functionally, catalyzes the specific phosphorylation of 1,6-anhydro-N-acetylmuramic acid (anhMurNAc) with the simultaneous cleavage of the 1,6-anhydro ring, generating MurNAc-6-P. Is required for the utilization of anhMurNAc either imported from the medium or derived from its own cell wall murein, and thus plays a role in cell wall recycling. The chain is Anhydro-N-acetylmuramic acid kinase from Chromobacterium violaceum (strain ATCC 12472 / DSM 30191 / JCM 1249 / CCUG 213 / NBRC 12614 / NCIMB 9131 / NCTC 9757 / MK).